The chain runs to 119 residues: Immunoglobulin heavy variable 2-70 (119 aa).

The N-terminal stretch at 1–19 (MDILCSTLLLLTVPSWVLS) is a signal peptide. Position 20 is a pyrrolidone carboxylic acid (Gln20). The tract at residues 20-44 (QVTLRESGPALVKPTQTLTLTCTFS) is framework-1. One can recognise an Ig-like domain in the interval 20 to 119 (QVTLRESGPA…DTATYYCARI (100 aa)). The cysteines at positions 41 and 116 are disulfide-linked. Positions 45–54 (GFSLSTSGMC) are complementarity-determining-1. The segment at 55–71 (VSWIRQPPGKALEWLAL) is framework-2. Residues 72–78 (IDWDDDK) are complementarity-determining-2. A framework-3 region spans residues 79–116 (YYSTSLKTRLTISKDTSKNQVVLTMTNMDPVDTATYYC). The segment at 117-119 (ARI) is complementarity-determining-3.

Immunoglobulins are composed of two identical heavy chains and two identical light chains; disulfide-linked.

It is found in the secreted. It localises to the cell membrane. V region of the variable domain of immunoglobulin heavy chains that participates in the antigen recognition. Immunoglobulins, also known as antibodies, are membrane-bound or secreted glycoproteins produced by B lymphocytes. In the recognition phase of humoral immunity, the membrane-bound immunoglobulins serve as receptors which, upon binding of a specific antigen, trigger the clonal expansion and differentiation of B lymphocytes into immunoglobulins-secreting plasma cells. Secreted immunoglobulins mediate the effector phase of humoral immunity, which results in the elimination of bound antigens. The antigen binding site is formed by the variable domain of one heavy chain, together with that of its associated light chain. Thus, each immunoglobulin has two antigen binding sites with remarkable affinity for a particular antigen. The variable domains are assembled by a process called V-(D)-J rearrangement and can then be subjected to somatic hypermutations which, after exposure to antigen and selection, allow affinity maturation for a particular antigen. This chain is Immunoglobulin heavy variable 2-70, found in Homo sapiens (Human).